Here is a 232-residue protein sequence, read N- to C-terminus: Ribose-5-phosphate isomerase A (232 aa).

Substrate is bound by residues 34–37, 89–92, and 102–105; these read TGST, DGAD, and KGGG. The active-site Proton acceptor is Glu111. Lys129 lines the substrate pocket.

Belongs to the ribose 5-phosphate isomerase family. As to quaternary structure, homodimer.

The enzyme catalyses aldehydo-D-ribose 5-phosphate = D-ribulose 5-phosphate. It participates in carbohydrate degradation; pentose phosphate pathway; D-ribose 5-phosphate from D-ribulose 5-phosphate (non-oxidative stage): step 1/1. In terms of biological role, catalyzes the reversible conversion of ribose-5-phosphate to ribulose 5-phosphate. The polypeptide is Ribose-5-phosphate isomerase A (Protochlamydia amoebophila (strain UWE25)).